We begin with the raw amino-acid sequence, 437 residues long: Sorting nexin-30 (437 aa).

2 disordered regions span residues 1–44 and 54–73; these read MAGG…PDLL and LILP…SSSS. Thr-38 bears the Phosphothreonine mark. Ser-40 bears the Phosphoserine mark. The segment covering 63-73 has biased composition (low complexity); that stretch reads AGTSSPASSSS. Residues 89–210 form the PX domain; it reads RDLFVIVDDP…IFLTAKDLNA (122 aa). Residues Arg-132, Gln-134, Lys-162, and Arg-176 each contribute to the a 1,2-diacyl-sn-glycero-3-phospho-(1D-myo-inositol-3-phosphate) site. A BAR domain is found at 234–437; it reads KLRTRPLEFA…PLLQEKQEAK (204 aa).

Belongs to the sorting nexin family. Heterodimer; heterodimerizes with SNX4.

The protein localises to the early endosome membrane. In terms of biological role, involved in the regulation of endocytosis and in several stages of intracellular trafficking. Together with SNX4, involved in autophagosome assembly. The protein is Sorting nexin-30 of Homo sapiens (Human).